Here is a 286-residue protein sequence, read N- to C-terminus: 2-hydroxy-6-oxo-6-phenylhexa-2,4-dienoate hydrolase (286 aa).

Substrate is bound by residues 42–43, Asn-51, Asn-111, Ser-180, and Arg-190; that span reads GG. Residue His-265 is the Proton acceptor of the active site. Trp-266 provides a ligand contact to substrate.

Belongs to the AB hydrolase superfamily. BphD family. As to quaternary structure, homodimer.

It carries out the reaction 2,6-dioxo-6-phenylhexa-3-enoate + H2O = 2-oxopent-4-enoate + benzoate + H(+). It functions in the pathway xenobiotic degradation; biphenyl degradation; 2-hydroxy-2,4-pentadienoate and benzoate from biphenyl: step 4/4. In terms of biological role, catalyzes an unusual C-C bond hydrolysis of 2-hydroxy-6-oxo-6-phenylhexa-2,4-dienoic acid (HOPDA) to produce benzoic acid and 2-hydroxy-2,4-pentadienoic acid (HPD). In Pseudomonas putida (Arthrobacter siderocapsulatus), this protein is 2-hydroxy-6-oxo-6-phenylhexa-2,4-dienoate hydrolase (bphD).